Reading from the N-terminus, the 687-residue chain is UvrABC system protein B (687 aa).

Residues 26 to 414 (EGLAAGEMYQ…GAVIEQVVRP (389 aa)) form the Helicase ATP-binding domain. 39–46 (GVTGSGKT) serves as a coordination point for ATP. The Beta-hairpin motif lies at 92–115 (YYDYYQPEAYVPASDTYIGKDASV). One can recognise a Helicase C-terminal domain in the interval 430–596 (QVDDLLSEIR…GIQKAVREII (167 aa)). One can recognise a UVR domain in the interval 630–665 (AKRLQQLERQMHKHAQNLEFEQAARLRDEIKRIKGW).

This sequence belongs to the UvrB family. As to quaternary structure, forms a heterotetramer with UvrA during the search for lesions. Interacts with UvrC in an incision complex.

The protein resides in the cytoplasm. In terms of biological role, the UvrABC repair system catalyzes the recognition and processing of DNA lesions. A damage recognition complex composed of 2 UvrA and 2 UvrB subunits scans DNA for abnormalities. Upon binding of the UvrA(2)B(2) complex to a putative damaged site, the DNA wraps around one UvrB monomer. DNA wrap is dependent on ATP binding by UvrB and probably causes local melting of the DNA helix, facilitating insertion of UvrB beta-hairpin between the DNA strands. Then UvrB probes one DNA strand for the presence of a lesion. If a lesion is found the UvrA subunits dissociate and the UvrB-DNA preincision complex is formed. This complex is subsequently bound by UvrC and the second UvrB is released. If no lesion is found, the DNA wraps around the other UvrB subunit that will check the other stand for damage. The sequence is that of UvrABC system protein B from Nitrosococcus oceani (strain ATCC 19707 / BCRC 17464 / JCM 30415 / NCIMB 11848 / C-107).